A 252-amino-acid polypeptide reads, in one-letter code: 3-dehydroquinate dehydratase (252 aa).

3-dehydroquinate contacts are provided by residues Ser21, 46–48, and Arg82; that span reads EWR. Catalysis depends on His143, which acts as the Proton donor/acceptor. Lys170 acts as the Schiff-base intermediate with substrate in catalysis. 3-dehydroquinate is bound by residues Arg213, Ser232, and Gln236.

This sequence belongs to the type-I 3-dehydroquinase family. As to quaternary structure, homodimer.

The enzyme catalyses 3-dehydroquinate = 3-dehydroshikimate + H2O. The protein operates within metabolic intermediate biosynthesis; chorismate biosynthesis; chorismate from D-erythrose 4-phosphate and phosphoenolpyruvate: step 3/7. In terms of biological role, involved in the third step of the chorismate pathway, which leads to the biosynthesis of aromatic amino acids. Catalyzes the cis-dehydration of 3-dehydroquinate (DHQ) and introduces the first double bond of the aromatic ring to yield 3-dehydroshikimate. The polypeptide is 3-dehydroquinate dehydratase (Salmonella choleraesuis (strain SC-B67)).